Consider the following 240-residue polypeptide: Ribosomal RNA small subunit methyltransferase I (240 aa).

This sequence belongs to the methyltransferase superfamily. RsmI family.

The protein localises to the cytoplasm. It catalyses the reaction cytidine(1402) in 16S rRNA + S-adenosyl-L-methionine = 2'-O-methylcytidine(1402) in 16S rRNA + S-adenosyl-L-homocysteine + H(+). Its function is as follows. Catalyzes the 2'-O-methylation of the ribose of cytidine 1402 (C1402) in 16S rRNA. The chain is Ribosomal RNA small subunit methyltransferase I from Leptospira biflexa serovar Patoc (strain Patoc 1 / ATCC 23582 / Paris).